The following is a 338-amino-acid chain: Tagatose 1,6-diphosphate aldolase (338 aa).

The protein belongs to the aldolase LacD family.

It catalyses the reaction D-tagatofuranose 1,6-bisphosphate = D-glyceraldehyde 3-phosphate + dihydroxyacetone phosphate. It functions in the pathway carbohydrate metabolism; D-tagatose 6-phosphate degradation; D-glyceraldehyde 3-phosphate and glycerone phosphate from D-tagatose 6-phosphate: step 2/2. This is Tagatose 1,6-diphosphate aldolase from Listeria monocytogenes serovar 1/2a (strain ATCC BAA-679 / EGD-e).